Here is a 268-residue protein sequence, read N- to C-terminus: Ubiquinone biosynthesis protein COQ4 homolog, mitochondrial (268 aa).

Zn(2+) contacts are provided by H171, D172, H175, and E187.

Belongs to the COQ4 family. Component of a multi-subunit COQ enzyme complex. Requires Zn(2+) as cofactor.

It is found in the mitochondrion inner membrane. It carries out the reaction a 4-hydroxy-3-methoxy-5-(all-trans-polyprenyl)benzoate + H(+) = a 2-methoxy-6-(all-trans-polyprenyl)phenol + CO2. The protein operates within cofactor biosynthesis; ubiquinone biosynthesis. Its function is as follows. Lyase that catalyzes the C1-decarboxylation of 4-hydroxy-3-methoxy-5-(all-trans-polyprenyl)benzoic acid into 2-methoxy-6-(all-trans-polyprenyl)phenol during ubiquinone biosynthesis. This Drosophila sechellia (Fruit fly) protein is Ubiquinone biosynthesis protein COQ4 homolog, mitochondrial.